The sequence spans 81 residues: ITACLVLIGTVCAKEGYLVNKSTGCKYNCLILGENKNCDMECKAKNQGGSYGYCYKLACWCEGLPESTPTYPIPGKTCRTK.

Residues 1-13 (ITACLVLIGTVCA) form the signal peptide. In terms of domain architecture, LCN-type CS-alpha/beta spans 14–79 (KEGYLVNKST…TYPIPGKTCR (66 aa)). Cystine bridges form between cysteine 25/cysteine 78, cysteine 29/cysteine 54, cysteine 38/cysteine 59, and cysteine 42/cysteine 61. A propeptide (removed by a carboxypeptidase) is located at residue lysine 81.

It belongs to the long (4 C-C) scorpion toxin superfamily. Sodium channel inhibitor family. Beta subfamily. As to expression, expressed by the venom gland.

The protein resides in the secreted. Functionally, beta toxins bind voltage-independently at site-4 of sodium channels (Nav) and shift the voltage of activation toward more negative potentials thereby affecting sodium channel activation and promoting spontaneous and repetitive firing. Is toxic on insects and crustaceans, but not on mammals. This is Insect-toxin Cn10 from Centruroides noxius (Mexican scorpion).